We begin with the raw amino-acid sequence, 124 residues long: UPF0225 protein SCO1677 (124 aa).

Belongs to the UPF0225 family.

The chain is UPF0225 protein SCO1677 from Streptomyces coelicolor (strain ATCC BAA-471 / A3(2) / M145).